The primary structure comprises 217 residues: Ribose-5-phosphate isomerase A (217 aa).

Substrate is bound by residues 28–31, 81–84, and 94–97; these read TGST, DGAD, and KGGG. Catalysis depends on glutamate 103, which acts as the Proton acceptor. Substrate is bound at residue lysine 121.

The protein belongs to the ribose 5-phosphate isomerase family. In terms of assembly, homodimer.

It catalyses the reaction aldehydo-D-ribose 5-phosphate = D-ribulose 5-phosphate. It participates in carbohydrate degradation; pentose phosphate pathway; D-ribose 5-phosphate from D-ribulose 5-phosphate (non-oxidative stage): step 1/1. Catalyzes the reversible conversion of ribose-5-phosphate to ribulose 5-phosphate. In Aeromonas hydrophila subsp. hydrophila (strain ATCC 7966 / DSM 30187 / BCRC 13018 / CCUG 14551 / JCM 1027 / KCTC 2358 / NCIMB 9240 / NCTC 8049), this protein is Ribose-5-phosphate isomerase A.